A 92-amino-acid polypeptide reads, in one-letter code: MANTPSAKKRAKQAEKRRSHNASLRSMVRTYIKNVVKAIDAKDAEKAQAAYVLAVPVIDRMADKGIIHKNKAARHKGRLNGHIKALKEAAAA.

The interval 1–23 (MANTPSAKKRAKQAEKRRSHNAS) is disordered. Positions 7–20 (AKKRAKQAEKRRSH) are enriched in basic residues.

It belongs to the bacterial ribosomal protein bS20 family.

Its function is as follows. Binds directly to 16S ribosomal RNA. The polypeptide is Small ribosomal subunit protein bS20 (Pseudomonas entomophila (strain L48)).